A 62-amino-acid chain; its full sequence is Sperm histone (62 aa).

The interval 1 to 62 (MARYRRSRTR…GSRRRRRRRY (62 aa)) is disordered. T9 is subject to Phosphothreonine.

It belongs to the protamine P1 family. As to expression, testis.

It is found in the nucleus. Its subcellular location is the chromosome. In terms of biological role, protamines substitute for histones in the chromatin of sperm during the haploid phase of spermatogenesis. They compact sperm DNA into a highly condensed, stable and inactive complex. The polypeptide is Sperm histone (Gallus gallus (Chicken)).